The chain runs to 146 residues: Extracellular globin-2A (146 aa).

The Globin domain maps to 4–146 (HCGPLQRLKV…EVIYPGIKHD (143 aa)). The cysteines at positions 5 and 134 are disulfide-linked. Histidine 97 contributes to the heme b binding site.

It belongs to the globin family. As to quaternary structure, disulfide bonded trimer of chains IIA, IIB, and IIC.

In Tylorrhynchus heterochetus (Japanese palolo worm), this protein is Extracellular globin-2A.